The following is a 192-amino-acid chain: Thymidine kinase (192 aa).

ATP contacts are provided by residues 9–16 (SAMNAGKS) and 87–90 (DECQ). Residue glutamate 88 is the Proton acceptor of the active site. Zn(2+) is bound by residues cysteine 145, cysteine 147, cysteine 182, and histidine 185.

This sequence belongs to the thymidine kinase family. As to quaternary structure, homotetramer.

Its subcellular location is the cytoplasm. It catalyses the reaction thymidine + ATP = dTMP + ADP + H(+). This Vibrio vulnificus (strain YJ016) protein is Thymidine kinase.